Consider the following 514-residue polypeptide: Bifunctional lysine-specific demethylase and histidyl-hydroxylase NO66 (514 aa).

Residues 1–53 are disordered; sequence MKRGLEEEIEEMSEEEVGVNNNNNGKKKKKKVVKKSKPVPLTKSVPQVSSQPL. Acidic residues predominate over residues 7–17; that stretch reads EEIEEMSEEEV. Residues 25–37 show a composition bias toward basic residues; it reads GKKKKKKVVKKSK. Residues 44-53 show a composition bias toward polar residues; the sequence is SVPQVSSQPL. Residues 180-327 form the JmjC domain; sequence CSVRLLNPQT…IGKVLNRALE (148 aa). 3 residues coordinate Fe cation: His-226, Asp-228, and His-291.

The protein belongs to the ROX family. NO66 subfamily. Fe(2+) serves as cofactor.

Its subcellular location is the nucleus. The catalysed reaction is N(6),N(6)-dimethyl-L-lysyl(36)-[histone H3] + 2 2-oxoglutarate + 2 O2 = L-lysyl(36)-[histone H3] + 2 formaldehyde + 2 succinate + 2 CO2. Its function is as follows. Oxygenase that can act as both a histone lysine demethylase and a ribosomal histidine hydroxylase. Specifically demethylates 'Lys-4' (H3K4me) and 'Lys-36' (H3K36me) of histone H3, thereby playing a central role in histone code. This chain is Bifunctional lysine-specific demethylase and histidyl-hydroxylase NO66 (jcdg), found in Dictyostelium discoideum (Social amoeba).